We begin with the raw amino-acid sequence, 345 residues long: Transmembrane protein 144 homolog (345 aa).

10 consecutive transmembrane segments (helical) span residues 3 to 23 (IAVG…MFVP), 32 to 52 (GIFV…VVYS), 61 to 81 (PLAM…VPIM), 84 to 104 (IGIG…GWAA), 120 to 140 (PFLN…FSQI), 193 to 213 (LAII…VPVI), 233 to 253 (VFSH…GYVI), 265 to 285 (LVGP…SWFV), 293 to 313 (AVSF…WSVF), and 324 to 344 (LRLL…VGVS).

Belongs to the TMEM144 family.

It localises to the membrane. This Caenorhabditis elegans protein is Transmembrane protein 144 homolog.